Reading from the N-terminus, the 1481-residue chain is Structural protein ORF147 (1481 aa).

Disordered regions lie at residues 65–88 (AEKR…ENLE) and 1319–1403 (DEKL…PPIP). Low complexity-rich tracts occupy residues 73–84 (KGSQKKSNSSSS), 1323–1336 (SSTV…SPKT), and 1393–1403 (SSRTTITPPIP).

The protein resides in the virion. The chain is Structural protein ORF147 from Noctuidae (owlet moths).